A 233-amino-acid polypeptide reads, in one-letter code: Hydroxyacylglutathione hydrolase (233 aa).

Positions 52, 54, 56, 57, 108, 125, and 163 each coordinate Zn(2+).

This sequence belongs to the metallo-beta-lactamase superfamily. Glyoxalase II family. As to quaternary structure, monomer. Zn(2+) serves as cofactor.

It carries out the reaction an S-(2-hydroxyacyl)glutathione + H2O = a 2-hydroxy carboxylate + glutathione + H(+). It participates in secondary metabolite metabolism; methylglyoxal degradation; (R)-lactate from methylglyoxal: step 2/2. Its function is as follows. Thiolesterase that catalyzes the hydrolysis of S-D-lactoyl-glutathione to form glutathione and D-lactic acid. This is Hydroxyacylglutathione hydrolase from Histophilus somni (strain 2336) (Haemophilus somnus).